Here is a 389-residue protein sequence, read N- to C-terminus: Type III polyketide synthase 21 (389 aa).

C170 (nucleophile) is an active-site residue.

It belongs to the thiolase-like superfamily. Chalcone/stilbene synthases family. As to expression, expressed in anthers. Expressed in young and adult flowers.

Its function is as follows. Plant type III polyketide synthases (PKSs) that catalyzes the condensation of fatty acyl-CoA with malonyl-CoA to generate triketide and tetraketide alpha-pyrones, the main components of pollen exine and potential sporopollenin precursors. This Oryza sativa subsp. japonica (Rice) protein is Type III polyketide synthase 21 (PKS21).